Reading from the N-terminus, the 532-residue chain is Flavin-containing monooxygenase 1 (532 aa).

Over methionine 1 to threonine 510 the chain is Lumenal. Residues glycine 9–serine 13, glutamate 32, leucine 40–tryptophan 41, and asparagine 61–serine 62 each bind FAD. Residues serine 60 to asparagine 61 and serine 195 to aspartate 198 contribute to the NADP(+) site. The helical transmembrane segment at phenylalanine 511–phenylalanine 531 threads the bilayer. A topological domain (cytoplasmic) is located at residue leucine 532.

Belongs to the FMO family. FAD serves as cofactor. In terms of tissue distribution, expressed in liver, lung and kidney and to a lesser extent in the heart and brain.

It localises to the endoplasmic reticulum membrane. It catalyses the reaction hypotaurine + NADPH + O2 + H(+) = taurine + NADP(+) + H2O. The catalysed reaction is hypotaurine + NADH + O2 + H(+) = taurine + NAD(+) + H2O. The enzyme catalyses trimethylamine + NADPH + O2 = trimethylamine N-oxide + NADP(+) + H2O. It carries out the reaction N,N-dimethylaniline + NADPH + O2 + H(+) = N,N-dimethylaniline N-oxide + NADP(+) + H2O. Broad spectrum monooxygenase that catalyzes the oxygenation of a wide variety of nitrogen- and sulfur-containing compounds including xenobiotics. Catalyzes the S-oxygenation of hypotaurine to produce taurine, an organic osmolyte involved in cell volume regulation as well as a variety of cytoprotective and developmental processes. In vitro, catalyzes the N-oxygenation of trimethylamine (TMA) to produce trimethylamine N-oxide (TMAO) and could therefore participate to the detoxification of this compound that is generated by the action of gut microbiota from dietary precursors such as choline, choline containing compounds, betaine or L-carnitine. This Rattus norvegicus (Rat) protein is Flavin-containing monooxygenase 1.